Reading from the N-terminus, the 258-residue chain is 5-oxoprolinase subunit A 2 (258 aa).

Belongs to the LamB/PxpA family. In terms of assembly, forms a complex composed of PxpA, PxpB and PxpC.

It carries out the reaction 5-oxo-L-proline + ATP + 2 H2O = L-glutamate + ADP + phosphate + H(+). Its function is as follows. Catalyzes the cleavage of 5-oxoproline to form L-glutamate coupled to the hydrolysis of ATP to ADP and inorganic phosphate. The protein is 5-oxoprolinase subunit A 2 of Pseudomonas putida (strain ATCC 47054 / DSM 6125 / CFBP 8728 / NCIMB 11950 / KT2440).